A 133-amino-acid polypeptide reads, in one-letter code: Capsid protein (133 aa).

This sequence belongs to the Leviviricetes capsid protein family. Homodimer. The homodimers binds to the viral RNA via an operator hairpin, but also to many other RNA sequences in the viral genome; this interaction probably shifts the virus from the replicative to the assembly phase and ensures specific encapsidation of the viral genome. Interacts with the maturation protein A2.

The protein resides in the virion. Capsid protein self-assembles to form an icosahedral capsid with a T=3 symmetry, about 26 nm in diameter, and consisting of 89 capsid proteins dimers (178 capsid proteins). Involved in viral genome encapsidation through the interaction between a capsid protein dimer and the multiple packaging signals present in the RNA genome. Binding of the capsid proteins to the viral RNA induces a conformational change required for efficient T=3 shell formation. The capsid also contains 1 copy of the A2 maturation protein. In terms of biological role, acts as a translational repressor of viral replicase synthesis late in infection. This latter function is the result of capsid protein interaction with an RNA hairpin which contains the replicase ribosome-binding site. This chain is Capsid protein, found in Escherichia virus Qbeta (Bacteriophage Q-beta).